The following is a 262-amino-acid chain: Zinc import ATP-binding protein ZnuC (262 aa).

Positions 4 to 220 constitute an ABC transporter domain; the sequence is LNLSGVRLSH…PEYLALFGPR (217 aa). 36–43 lines the ATP pocket; the sequence is GPNGAGKS. The segment at 238–262 is disordered; sequence ADGSVLPLAEGGGEPHTHGPGCRHG.

The protein belongs to the ABC transporter superfamily. Zinc importer (TC 3.A.1.15.5) family. The complex is composed of two ATP-binding proteins (ZnuC), two transmembrane proteins (ZnuB) and a solute-binding protein (ZnuA).

The protein localises to the cell inner membrane. The enzyme catalyses Zn(2+)(out) + ATP(in) + H2O(in) = Zn(2+)(in) + ADP(in) + phosphate(in) + H(+)(in). Part of the ABC transporter complex ZnuABC involved in zinc import. Responsible for energy coupling to the transport system. This chain is Zinc import ATP-binding protein ZnuC, found in Paramagnetospirillum magneticum (strain ATCC 700264 / AMB-1) (Magnetospirillum magneticum).